A 546-amino-acid chain; its full sequence is Phosphoglucomutase (546 aa).

The Phosphoserine intermediate role is filled by Ser-135. Ser-135, Asp-288, Asp-290, and Asp-292 together coordinate Mg(2+).

It belongs to the phosphohexose mutase family. Mg(2+) serves as cofactor.

It catalyses the reaction alpha-D-glucose 1-phosphate = alpha-D-glucose 6-phosphate. It participates in glycolipid metabolism; diglucosyl-diacylglycerol biosynthesis. In terms of biological role, catalyzes the interconversion between glucose-6-phosphate and alpha-glucose-1-phosphate. This is the first step in the biosynthesis of diglucosyl-diacylglycerol (Glc2-DAG), i.e. a glycolipid found in the membrane, which is also used as a membrane anchor for lipoteichoic acid (LTA). This is Phosphoglucomutase (pgcA) from Staphylococcus epidermidis (strain ATCC 35984 / DSM 28319 / BCRC 17069 / CCUG 31568 / BM 3577 / RP62A).